The sequence spans 341 residues: Basic membrane protein B (341 aa).

Positions 1–14 (MRIVIFIFGILLTS) are cleaved as a signal peptide. A lipid anchor (N-palmitoyl cysteine) is attached at cysteine 15. Cysteine 15 carries S-diacylglycerol cysteine lipidation.

The protein belongs to the BMP lipoprotein family. As to quaternary structure, monomer.

It is found in the cell inner membrane. Functionally, may be part of an ABC-type nucleoside uptake system involved in the purine salvage pathway. This is Basic membrane protein B (bmpB) from Borreliella burgdorferi (strain ATCC 35210 / DSM 4680 / CIP 102532 / B31) (Borrelia burgdorferi).